The chain runs to 1786 residues: Transcription initiation factor TFIID subunit 1b (1786 aa).

Disordered regions lie at residues 54 to 83 (EDYD…PVVL) and 350 to 372 (FGSR…PQLL). Basic and acidic residues predominate over residues 61–83 (GQEKEHVPVEKSFDSEEREPVVL). Over residues 352–362 (SRGSQSTNEST) the composition is skewed to polar residues. Positions 574-650 (MTIVVKSLGG…VHLLRTKVHL (77 aa)) constitute a Ubiquitin-like domain. Basic residues predominate over residues 1303–1313 (MKTNKHCPKYR). Disordered regions lie at residues 1303-1382 (MKTN…DVAA), 1397-1471 (LKIS…KDQA), and 1596-1634 (SERE…ESGQ). Over residues 1357-1377 (TKISVNEATKVGDSTSKTPGS) the composition is skewed to polar residues. Basic residues predominate over residues 1397–1407 (LKISSKAKPKA). The segment covering 1433 to 1464 (HNPSVSGQLLPSTETDQAASSRYTTSVPQPSL) has biased composition (polar residues). Coiled-coil stretches lie at residues 1591–1620 (REVI…LENY) and 1752–1786 (LADE…DSLR). Residues 1604–1613 (RKAKQKKKLQ) are compositionally biased toward basic residues. Residues 1656–1774 (KRRKKGQVGL…DEYRDELKEA (119 aa)) enclose the Bromo domain.

This sequence belongs to the TAF1 family. Component of the TFIID complex. TFIID is composed of TATA binding protein (TBP) and a number of TBP-associated factors (TAFs) whose MWs range from 14-217 kDa. Expressed in roots, shoots, leaves and inflorescences.

The protein resides in the nucleus. Functionally, TAFs are components of the transcription factor IID (TFIID) complex that is essential for mediating regulation of RNA polymerase transcription. Core scaffold of the TFIID complex. Acts as a histone acetyltransferase involved in the light regulation of growth and gene expression. Required for H3K9, H3K27, and H4K12 acetylation on the target promoters. This chain is Transcription initiation factor TFIID subunit 1b (TAF1B), found in Arabidopsis thaliana (Mouse-ear cress).